The sequence spans 637 residues: Serine protease Hayan (637 aa).

The N-terminal stretch at 1–26 is a signal peptide; that stretch reads MAMISARRYFLLGLLVLTTSAYVTVG. The Clip domain occupies 31–79; sequence PCQVRSDIPGICLSSSACENIRGYLKSGTLSTSQVPSCGFGAREEIICC. 3 disulfides stabilise this stretch: Cys-32/Cys-78, Cys-42/Cys-68, and Cys-48/Cys-79. 4 disordered regions span residues 95–137, 152–178, 216–260, and 286–365; these read FHAT…LDEN, KPQK…SMKM, QRSF…NNNN, and LQTT…EKER. Over residues 125-136 the composition is skewed to basic and acidic residues; sequence EGKRERESRLDE. The segment covering 234 to 244 has biased composition (polar residues); that stretch reads PLTTPRSRPQR. A compositionally biased stretch (low complexity) spans 245–260; sequence PNNSNFNTNPSPNNNN. Positions 306-320 are enriched in basic and acidic residues; the sequence is EPYRFRGQDRDKDTQ. The segment covering 321 to 332 has biased composition (polar residues); sequence PQEPWNDVSNNL. 4 cysteine pairs are disulfide-bonded: Cys-371/Cys-497, Cys-414/Cys-430, Cys-543/Cys-567, and Cys-578/Cys-609. Residues 385-632 form the Peptidase S1 domain; that stretch reads ILDGERVDRG…FLDYIEGIVW (248 aa). Active-site charge relay system residues include His-429 and Asp-477. Catalysis depends on Ser-582, which acts as the Charge relay system.

Belongs to the peptidase S1 family. CLIP subfamily.

Its subcellular location is the secreted. In terms of biological role, serine protease which, by converting prophenoloxidase 1 (PPO1) into its active form, plays an essential role in the melanization immune response to physical or septic wounding. May function in diverse PPO1-activating cascades that are negatively controlled by different serpin proteins; Spn27A and Spn28D in the hemolymph, and Spn28D and Spn77BA in the trachea. Also required in the systematic wound response by mediating the redox-dependent activation of the JNK cytoprotective cascade in neuronal tissues after integument wounding. The protein is Serine protease Hayan of Drosophila melanogaster (Fruit fly).